The primary structure comprises 370 residues: tRNA-specific 2-thiouridylase MnmA (370 aa).

ATP contacts are provided by residues 7–14 (GISGGVDS) and Met33. An interaction with target base in tRNA region spans residues 104–106 (NPD). The Nucleophile role is filled by Cys109. Cys109 and Cys208 form a disulfide bridge. Gly134 is a binding site for ATP. Residues 158 to 160 (KDQ) form an interaction with tRNA region. Residue Cys208 is the Cysteine persulfide intermediate of the active site.

The protein belongs to the MnmA/TRMU family.

It localises to the cytoplasm. The enzyme catalyses S-sulfanyl-L-cysteinyl-[protein] + uridine(34) in tRNA + AH2 + ATP = 2-thiouridine(34) in tRNA + L-cysteinyl-[protein] + A + AMP + diphosphate + H(+). Its function is as follows. Catalyzes the 2-thiolation of uridine at the wobble position (U34) of tRNA, leading to the formation of s(2)U34. This is tRNA-specific 2-thiouridylase MnmA from Malacoplasma penetrans (strain HF-2) (Mycoplasma penetrans).